We begin with the raw amino-acid sequence, 152 residues long: Large ribosomal subunit protein bL9 (152 aa).

Residues Gln41–Glu61 form a disordered region. A compositionally biased stretch (basic and acidic residues) spans Ala49–Glu61.

The protein belongs to the bacterial ribosomal protein bL9 family.

Its function is as follows. Binds to the 23S rRNA. The sequence is that of Large ribosomal subunit protein bL9 from Levilactobacillus brevis (strain ATCC 367 / BCRC 12310 / CIP 105137 / JCM 1170 / LMG 11437 / NCIMB 947 / NCTC 947) (Lactobacillus brevis).